A 419-amino-acid chain; its full sequence is Light-independent protochlorophyllide reductase subunit N (419 aa).

The [4Fe-4S] cluster site is built by C20, C45, and C102.

The protein belongs to the BchN/ChlN family. As to quaternary structure, protochlorophyllide reductase is composed of three subunits; BchL, BchN and BchB. Forms a heterotetramer of two BchB and two BchN subunits. [4Fe-4S] cluster serves as cofactor.

The catalysed reaction is chlorophyllide a + oxidized 2[4Fe-4S]-[ferredoxin] + 2 ADP + 2 phosphate = protochlorophyllide a + reduced 2[4Fe-4S]-[ferredoxin] + 2 ATP + 2 H2O. Its pathway is porphyrin-containing compound metabolism; bacteriochlorophyll biosynthesis (light-independent). Its function is as follows. Component of the dark-operative protochlorophyllide reductase (DPOR) that uses Mg-ATP and reduced ferredoxin to reduce ring D of protochlorophyllide (Pchlide) to form chlorophyllide a (Chlide). This reaction is light-independent. The NB-protein (BchN-BchB) is the catalytic component of the complex. The polypeptide is Light-independent protochlorophyllide reductase subunit N (Chlorobaculum tepidum (strain ATCC 49652 / DSM 12025 / NBRC 103806 / TLS) (Chlorobium tepidum)).